A 1153-amino-acid chain; its full sequence is Error-prone DNA polymerase (1153 aa).

Disordered stretches follow at residues 1–39 (MFYSCCVSIEPRDPASEPTPTPRRPLRKSQPRSFSQAQP) and 64–89 (VGEGQRRTTSLDPAEAEGTGAEGASQ).

The protein belongs to the DNA polymerase type-C family. DnaE2 subfamily.

Its subcellular location is the cytoplasm. The catalysed reaction is DNA(n) + a 2'-deoxyribonucleoside 5'-triphosphate = DNA(n+1) + diphosphate. Its function is as follows. DNA polymerase involved in damage-induced mutagenesis and translesion synthesis (TLS). It is not the major replicative DNA polymerase. The sequence is that of Error-prone DNA polymerase from Corynebacterium jeikeium (strain K411).